Reading from the N-terminus, the 649-residue chain is Golgin subfamily A member 6-like protein 26 (649 aa).

5 disordered regions span residues 1–94 (MWPQ…HQEA), 300–330 (QEEKIREQEEKMRRQEEMMWEKEEKMRRQEE), 358–440 (EKMH…EMWR), 455–572 (KEKM…REQE), and 584–620 (EQEEMMQEQEEKMWEQEEKMCEQEEKMQEQEEKMRRQ). Residues 10 to 23 (HPHLPTHPHLPTHP) are compositionally biased toward low complexity. Basic and acidic residues predominate over residues 25–46 (MSKETRQSKLAEAKEQLTDHHP). Composition is skewed to polar residues over residues 47 to 57 (QTNPSVGTAAS) and 65 to 77 (NNGTNPETTTSGG). A compositionally biased stretch (basic and acidic residues) spans 80 to 94 (SPEDEQKASHQHQEA). Residues 151-644 (LEQALSAVAT…EEKMQEHQEH (494 aa)) are a coiled coil.

The protein belongs to the GOLGA6 family.

In Homo sapiens (Human), this protein is Golgin subfamily A member 6-like protein 26 (GOLGA6L26).